Reading from the N-terminus, the 502-residue chain is Histidine--tRNA ligase (502 aa).

The protein belongs to the class-II aminoacyl-tRNA synthetase family. In terms of assembly, homodimer.

The protein resides in the cytoplasm. The catalysed reaction is tRNA(His) + L-histidine + ATP = L-histidyl-tRNA(His) + AMP + diphosphate + H(+). In Brucella abortus (strain S19), this protein is Histidine--tRNA ligase.